The primary structure comprises 308 residues: Protein translocase subunit SecF (308 aa).

6 consecutive transmembrane segments (helical) span residues 22–42 (AVSY…IGIY), 140–160 (IEAG…YIWV), 164–184 (WYFG…ALGF), 194–214 (LSTI…SVVI), 246–266 (ILTV…GGEA), and 272–292 (VLVF…SAPI).

Belongs to the SecD/SecF family. SecF subfamily. As to quaternary structure, forms a complex with SecD. Part of the essential Sec protein translocation apparatus which comprises SecA, SecYEG and auxiliary proteins SecDF-YajC and YidC.

It is found in the cell inner membrane. Functionally, part of the Sec protein translocase complex. Interacts with the SecYEG preprotein conducting channel. SecDF uses the proton motive force (PMF) to complete protein translocation after the ATP-dependent function of SecA. This chain is Protein translocase subunit SecF, found in Rickettsia akari (strain Hartford).